Consider the following 113-residue polypeptide: Hydrogenase maturation factor HypA (113 aa).

Residue His-2 coordinates Ni(2+). Zn(2+)-binding residues include Cys-73, Cys-76, Cys-89, and Cys-92.

Belongs to the HypA/HybF family.

Functionally, involved in the maturation of [NiFe] hydrogenases. Required for nickel insertion into the metal center of the hydrogenase. In Aeromonas hydrophila subsp. hydrophila (strain ATCC 7966 / DSM 30187 / BCRC 13018 / CCUG 14551 / JCM 1027 / KCTC 2358 / NCIMB 9240 / NCTC 8049), this protein is Hydrogenase maturation factor HypA.